A 376-amino-acid chain; its full sequence is Pyrimidine monooxygenase RutA (376 aa).

Residues 61-62 (IK), asparagine 127, glutamate 136, 152-153 (RY), and serine 202 each bind FMN.

The protein belongs to the NtaA/SnaA/DszA monooxygenase family. RutA subfamily.

The enzyme catalyses uracil + FMNH2 + NADH + O2 = (Z)-3-ureidoacrylate + FMN + NAD(+) + H2O + H(+). It carries out the reaction thymine + FMNH2 + NADH + O2 = (Z)-2-methylureidoacrylate + FMN + NAD(+) + H2O + H(+). In terms of biological role, catalyzes the pyrimidine ring opening between N-3 and C-4 by an unusual flavin hydroperoxide-catalyzed mechanism, adding oxygen atoms in the process to yield ureidoacrylate peracid, that immediately reacts with FMN forming ureidoacrylate and FMN-N(5)-oxide. The FMN-N(5)-oxide reacts spontaneously with NADH to produce FMN. Requires the flavin reductase RutF to regenerate FMN in vivo. The polypeptide is Pyrimidine monooxygenase RutA (Methylorubrum extorquens (strain CM4 / NCIMB 13688) (Methylobacterium extorquens)).